The following is a 335-amino-acid chain: Biotin synthase (335 aa).

A Radical SAM core domain is found at 39–267; it reads TKIQVCKLIS…ASDVRLSAGR (229 aa). Residues Cys-54, Cys-58, and Cys-61 each contribute to the [4Fe-4S] cluster site. Residues Cys-98, Cys-130, Cys-190, and Arg-262 each coordinate [2Fe-2S] cluster.

Belongs to the radical SAM superfamily. Biotin synthase family. Homodimer. The cofactor is [4Fe-4S] cluster. [2Fe-2S] cluster is required as a cofactor.

The enzyme catalyses (4R,5S)-dethiobiotin + (sulfur carrier)-SH + 2 reduced [2Fe-2S]-[ferredoxin] + 2 S-adenosyl-L-methionine = (sulfur carrier)-H + biotin + 2 5'-deoxyadenosine + 2 L-methionine + 2 oxidized [2Fe-2S]-[ferredoxin]. Its pathway is cofactor biosynthesis; biotin biosynthesis; biotin from 7,8-diaminononanoate: step 2/2. Catalyzes the conversion of dethiobiotin (DTB) to biotin by the insertion of a sulfur atom into dethiobiotin via a radical-based mechanism. This Nostoc punctiforme (strain ATCC 29133 / PCC 73102) protein is Biotin synthase.